Reading from the N-terminus, the 210-residue chain is Guanylate kinase (210 aa).

The region spanning 8 to 188 is the Guanylate kinase-like domain; it reads GNLFIIAAPS…SLASLEHIVL (181 aa). 15-22 is an ATP binding site; sequence APSGAGKS.

Belongs to the guanylate kinase family.

The protein resides in the cytoplasm. It catalyses the reaction GMP + ATP = GDP + ADP. Essential for recycling GMP and indirectly, cGMP. In Idiomarina loihiensis (strain ATCC BAA-735 / DSM 15497 / L2-TR), this protein is Guanylate kinase.